A 391-amino-acid chain; its full sequence is Nuclear hormone receptor family member nhr-115 (391 aa).

Residues 5-77 (LFPCQICGQN…IGMDASKFQY (73 aa)) constitute a DNA-binding region (nuclear receptor). The NR C4-type zinc finger occupies 8–28 (CQICGQNSHGTHFGIVSCRAC). Residues 41–65 (ARKGCLTNFKDKGSCFCKPCRLRKC) form an NR C4-type; atypical zinc finger. Residues 130–388 (YLDHGCETPI…FSHPEMFDDS (259 aa)) form the NR LBD domain.

It belongs to the nuclear hormone receptor family.

The protein resides in the nucleus. Orphan nuclear receptor. The protein is Nuclear hormone receptor family member nhr-115 (nhr-115) of Caenorhabditis elegans.